We begin with the raw amino-acid sequence, 559 residues long: Nucleoprotein (559 aa).

Residues 53 to 235 are binding site for the cap structure m7GTP; it reads MRKEKRTDSD…ITQEQSQINI (183 aa). Mn(2+)-binding residues include D378 and E380. The Zn(2+) site is built by E388, C495, H498, and C519. D523 is a Mn(2+) binding site.

The protein belongs to the arenaviridae nucleocapsid protein family. Homomultimerizes to form the nucleocapsid. Binds to viral genomic RNA. Interacts with glycoprotein G2. Interacts with protein Z; this interaction probably directs the encapsidated genome to budding sites. Interacts with protein L; this interaction does not interfere with Z-L interaction. Interacts with host IKBKE (via Protein kinase domain); the interaction inhibits IKBKE kinase activity.

The protein resides in the virion. Its subcellular location is the host cytoplasm. Encapsidates the genome, protecting it from nucleases. The encapsidated genomic RNA is termed the nucleocapsid (NC). Serves as template for viral transcription and replication. The increased presence of protein N in host cell does not seem to trigger the switch from transcription to replication as observed in other negative strain RNA viruses. Through the interaction with host IKBKE, strongly inhibits the phosphorylation and nuclear translocation of host IRF3, a protein involved in interferon activation pathway, leading to the inhibition of interferon-beta and IRF3-dependent promoters activation. Also encodes a functional 3'-5' exoribonuclease that degrades preferentially dsRNA substrates and thereby participates in the suppression of interferon induction. This chain is Nucleoprotein, found in Sooretamys angouya (Paraguayan rice rat).